Here is a 151-residue protein sequence, read N- to C-terminus: Pseudo histidine-containing phosphotransfer protein 2 (151 aa).

An HPt domain is found at 38-133 (SPNFVEEVAA…ATLKQKLESY (96 aa)).

Functionally, functions as a two-component phosphorelay mediator between cytokinin sensor histidine kinases and response regulators (B-type ARRs). Plays an important role in propagating cytokinin signal transduction. This is Pseudo histidine-containing phosphotransfer protein 2 from Oryza sativa subsp. japonica (Rice).